A 468-amino-acid polypeptide reads, in one-letter code: MTKSLPKDFIFGGATAAYQAEGATHTDGKGPVAWDKYLEDNYWYTAEPASDFYHKYPVDLKLAEEYGVNGIRISIAWSRIFPTGYGEVNPKGVEFYHNLFAECHKRHVEPFVTLHHFDTPEALHSNGDFLNRDNIEHFVDYAAFCFEEFPEVRYWTTFNEIGPIGDGQYLVGKFPPGIQYDLAKVFQSHHNMMVSHARAVKLYKDKGYKGEIGVVHALPTKYPYDPENPADVRAAELEDIIHNKFILDATYLGHYSDVTLAGVNHILKVNGGQLDLRDEDFAALEAAKDLNDFLGINYYMSDWMRDFDGETEIIHNGKGEKGSSKYQIKGVGRRESPTHIPKTDWDWIIYPQGLYDQIMRIKKDYPNYKKIYITENGLGYKDEFVDNTVYDDARIDYVKQHLEVLSDAIADGANVKGYFIWSLMDVFSWSNGYEKRYGLFYVDFETQERYPKKSAHWYRRLAETQMIE.

Positions 19, 116, 159, 160, and 297 each coordinate D-galactose 6-phosphate. Residue Glu160 is the Proton donor of the active site. Catalysis depends on Glu375, which acts as the Nucleophile. The D-galactose 6-phosphate site is built by Ser428, Trp429, Lys435, and Tyr437.

The protein belongs to the glycosyl hydrolase 1 family.

The catalysed reaction is a 6-phospho-beta-D-galactoside + H2O = D-galactose 6-phosphate + an alcohol. The protein operates within carbohydrate metabolism; lactose degradation; D-galactose 6-phosphate and beta-D-glucose from lactose 6-phosphate: step 1/1. The sequence is that of 6-phospho-beta-galactosidase from Streptococcus gordonii (strain Challis / ATCC 35105 / BCRC 15272 / CH1 / DL1 / V288).